We begin with the raw amino-acid sequence, 529 residues long: Peptide chain release factor 3 (529 aa).

In terms of domain architecture, tr-type G spans 11-280 (AKRRTFAIIS…GLVEWAPAPM (270 aa)). Residues 20 to 27 (SHPDAGKT), 88 to 92 (DTPGH), and 142 to 145 (NKLD) each bind GTP.

This sequence belongs to the TRAFAC class translation factor GTPase superfamily. Classic translation factor GTPase family. PrfC subfamily.

It is found in the cytoplasm. In terms of biological role, increases the formation of ribosomal termination complexes and stimulates activities of RF-1 and RF-2. It binds guanine nucleotides and has strong preference for UGA stop codons. It may interact directly with the ribosome. The stimulation of RF-1 and RF-2 is significantly reduced by GTP and GDP, but not by GMP. The chain is Peptide chain release factor 3 from Klebsiella pneumoniae (strain 342).